A 484-amino-acid polypeptide reads, in one-letter code: Siroheme synthase 1 (484 aa).

The segment at 1–205 (MHHYPIFLKL…GREAEGEAEL (205 aa)) is precorrin-2 dehydrogenase /sirohydrochlorin ferrochelatase. NAD(+) is bound by residues 22–23 (EA) and 43–44 (PV). Phosphoserine is present on Ser130. The interval 220–484 (GEVFLVGAGP…DPCWTGGMRD (265 aa)) is uroporphyrinogen-III C-methyltransferase. Pro229 provides a ligand contact to S-adenosyl-L-methionine. The Proton acceptor role is filled by Asp252. The Proton donor role is filled by Lys274. S-adenosyl-L-methionine contacts are provided by residues 305 to 307 (GGD), Leu310, 335 to 336 (SA), Met387, and Ala416.

This sequence in the N-terminal section; belongs to the precorrin-2 dehydrogenase / sirohydrochlorin ferrochelatase family. In the C-terminal section; belongs to the precorrin methyltransferase family.

It catalyses the reaction uroporphyrinogen III + 2 S-adenosyl-L-methionine = precorrin-2 + 2 S-adenosyl-L-homocysteine + H(+). It carries out the reaction precorrin-2 + NAD(+) = sirohydrochlorin + NADH + 2 H(+). The enzyme catalyses siroheme + 2 H(+) = sirohydrochlorin + Fe(2+). It participates in cofactor biosynthesis; adenosylcobalamin biosynthesis; precorrin-2 from uroporphyrinogen III: step 1/1. Its pathway is cofactor biosynthesis; adenosylcobalamin biosynthesis; sirohydrochlorin from precorrin-2: step 1/1. It functions in the pathway porphyrin-containing compound metabolism; siroheme biosynthesis; precorrin-2 from uroporphyrinogen III: step 1/1. The protein operates within porphyrin-containing compound metabolism; siroheme biosynthesis; siroheme from sirohydrochlorin: step 1/1. It participates in porphyrin-containing compound metabolism; siroheme biosynthesis; sirohydrochlorin from precorrin-2: step 1/1. In terms of biological role, multifunctional enzyme that catalyzes the SAM-dependent methylations of uroporphyrinogen III at position C-2 and C-7 to form precorrin-2 via precorrin-1. Then it catalyzes the NAD-dependent ring dehydrogenation of precorrin-2 to yield sirohydrochlorin. Finally, it catalyzes the ferrochelation of sirohydrochlorin to yield siroheme. The protein is Siroheme synthase 1 of Halorhodospira halophila (strain DSM 244 / SL1) (Ectothiorhodospira halophila (strain DSM 244 / SL1)).